The sequence spans 444 residues: Maturase K (444 aa).

Belongs to the intron maturase 2 family. MatK subfamily.

Its subcellular location is the plastid. It is found in the chloroplast. Its function is as follows. Usually encoded in the trnK tRNA gene intron. Probably assists in splicing its own and other chloroplast group II introns. In Chamaecyparis lawsoniana (Lawson false cypress), this protein is Maturase K.